The following is a 96-amino-acid chain: MF6 protein (96 aa).

In Myxoma virus (strain Uriarra) (MYXV), this protein is MF6 protein.